The sequence spans 621 residues: Putative DNA 3'-5' helicase Rad25 (621 aa).

Residues 268–417 form the Helicase ATP-binding domain; sequence VERFTEQGSG…EIFTLIGPPI (150 aa). An ATP-binding site is contributed by 281-288; that stretch reads GPPGSGKT. Residues 371-374 carry the DEAH box motif; it reads DEVH. The segment at 441 to 465 is disordered; the sequence is PWGDETEQSEYSSTSGHDRRQAAAS. Residues 469–621 form the Helicase C-terminal domain; that stretch reads KIDEIRYALA…EAVEPPAKTE (153 aa).

This sequence belongs to the helicase family. RAD25/XPB subfamily.

It catalyses the reaction Couples ATP hydrolysis with the unwinding of duplex DNA by translocating in the 3'-5' direction.. The catalysed reaction is ATP + H2O = ADP + phosphate + H(+). This is Putative DNA 3'-5' helicase Rad25 from Haloarcula marismortui (strain ATCC 43049 / DSM 3752 / JCM 8966 / VKM B-1809) (Halobacterium marismortui).